The sequence spans 200 residues: Large ribosomal subunit protein bL25 (200 aa).

Belongs to the bacterial ribosomal protein bL25 family. CTC subfamily. Part of the 50S ribosomal subunit; part of the 5S rRNA/L5/L18/L25 subcomplex. Contacts the 5S rRNA. Binds to the 5S rRNA independently of L5 and L18.

Functionally, this is one of the proteins that binds to the 5S RNA in the ribosome where it forms part of the central protuberance. The chain is Large ribosomal subunit protein bL25 from Leifsonia xyli subsp. xyli (strain CTCB07).